Here is a 265-residue protein sequence, read N- to C-terminus: H-2 class II histocompatibility antigen, A beta chain (265 aa).

The N-terminal stretch at 1 to 27 (MALQIPSLLLSAAVVVLMVLSSPGTEG) is a signal peptide. Residues 28-122 (GDSERHFVYQ…PETHTSLRRL (95 aa)) are beta-1. Residues 28 to 226 (GDSERHFVYQ…RAQSESAWSK (199 aa)) are Extracellular-facing. Cystine bridges form between Cys-42/Cys-106 and Cys-145/Cys-201. Asn-46 carries N-linked (GlcNAc...) asparagine glycosylation. Residues 123-216 (EQPNVVISLS…SLKSPITVEW (94 aa)) are beta-2. In terms of domain architecture, Ig-like C1-type spans 125 to 213 (PNVVISLSRT…EHPSLKSPIT (89 aa)). The connecting peptide stretch occupies residues 217–226 (RAQSESAWSK). Residues 227 to 247 (MLSGIGGCVLGVIFLGLGLFI) traverse the membrane as a helical segment. The Cytoplasmic portion of the chain corresponds to 248-265 (RHRSQKGPRGPPPAGLLQ).

Belongs to the MHC class II family. Ubiquitinated in immature dendritic cells leading to down-regulation of MHC class II.

It is found in the membrane. In Mus musculus (Mouse), this protein is H-2 class II histocompatibility antigen, A beta chain (H2-Ab1).